We begin with the raw amino-acid sequence, 266 residues long: MLHSTKLVFRATPQALCFPVRSYSRYVRTVPKTASAKTTSKLAPSITTEDEVAEQDPSLQEPQSATSTASFAFHDAPPETRSVLNSSTNNNIDWSDSYHGLGSQPFSREIADILLAPIKDQDIEIKPDGLLYLPEIKYRRILNKAFGPGGWGLVPRTESLITKSQISREYGLICHGRLISIARGEQDYFGGEEKVTTALEGCKSNALMRCCKDLGIASELWDPGFIRKWKAKYCEEVFVEHVVNKKKKKLWKLKSNKKIEYPYKQL.

The N-terminal 23 residues, 1 to 23, are a transit peptide targeting the mitochondrion; it reads MLHSTKLVFRATPQALCFPVRSY. Composition is skewed to polar residues over residues 37 to 47 and 57 to 68; these read KTTSKLAPSIT and PSLQEPQSATST. The tract at residues 37-68 is disordered; the sequence is KTTSKLAPSITTEDEVAEQDPSLQEPQSATST.

It belongs to the MGM101 family. In terms of assembly, forms homooligomers in vitro.

Its subcellular location is the mitochondrion matrix. It is found in the mitochondrion nucleoid. In terms of biological role, plays a role in the replication of the mitochondrial genome and the maintenance of its telomeres. Able to catalyze strand annealing and D-loop formation. Binds a wide variety of DNA substrates. Exhibited the highest affinity for DNA molecules carrying 3' ssDNA overhangs (Y-form, 3' FLAP, 3' overhang) and for substrates with complex structures (X-O and Fork). Forms homogeneous ring-shaped structures at the ssDNA native telomeres ends. Oligomers seem to bind to the ssDNA as a filament until they reach the double-stranded region and induce the formation of bends and loops within the double-stranded part of the molecules. The chain is Mitochondrial genome maintenance protein MGM101 from Candida parapsilosis (strain CDC 317 / ATCC MYA-4646) (Yeast).